Reading from the N-terminus, the 415-residue chain is Probable carboxypeptidase ACLA_013260 (415 aa).

An N-terminal signal peptide occupies residues Met1–Ala17. An N-linked (GlcNAc...) asparagine glycan is attached at Asn97. Asp145 provides a ligand contact to Zn(2+). Glu177 functions as the Proton acceptor in the catalytic mechanism. Glu178 lines the Zn(2+) pocket. A glycan (N-linked (GlcNAc...) asparagine) is linked at Asn271.

This sequence belongs to the peptidase M20A family. Zn(2+) serves as cofactor.

The protein localises to the secreted. The protein is Probable carboxypeptidase ACLA_013260 of Aspergillus clavatus (strain ATCC 1007 / CBS 513.65 / DSM 816 / NCTC 3887 / NRRL 1 / QM 1276 / 107).